Reading from the N-terminus, the 493-residue chain is Transcript termination protein OPG145 (493 aa).

The Helicase ATP-binding domain maps to methionine 100–serine 256. Leucine 113 to threonine 120 contacts ATP. Positions aspartate 206–histidine 209 match the DESH box motif. The 148-residue stretch at isoleucine 309–glycine 456 folds into the Helicase C-terminal domain.

The protein belongs to the helicase family. Poxviruses subfamily. Interacts with OPG087. Might be part of a transcription complex composed at least of OPG087, OPG110, and OPG145.

Its subcellular location is the virion. In terms of biological role, DNA helicase which seems to act as a postreplicative transcription termination factor. Involved in ATP-dependent release of nascent RNA. Forms a stable complex with single-stranded DNA, and to a lesser extent RNA. In Homo sapiens (Human), this protein is Transcript termination protein OPG145 (OPG145).